Consider the following 142-residue polypeptide: uncharacterized protein (142 aa).

It is found in the mitochondrion. This is an uncharacterized protein from Mus musculus (Mouse).